A 398-amino-acid polypeptide reads, in one-letter code: Transcription factor kk1f (398 aa).

The segment at 1–28 is disordered; it reads MTFVETVAVPDNEERPSAGHNRPVADST. A bZIP domain is found at 31–62; that stretch reads PNAREMKVQNRVAQRTHHRRLKTKLEVLRERL. The interval 34-50 is basic motif; sequence REMKVQNRVAQRTHHRR. Positions 51 to 58 are leucine-zipper; it reads LKTKLEVL.

It belongs to the bZIP family.

The protein localises to the nucleus. Its pathway is secondary metabolite biosynthesis. In terms of biological role, transcription factor; part of the gene cluster that mediates the biosynthesis of KK-1, a novel cyclic depsipeptide with 10 residues which is a promising active compound with high activity against many plant pathogens, especially Botrytis cinerea. Positively regulates the expression of all the genes from the KK-1 biosynthesis gene cluster. This chain is Transcription factor kk1f, found in Curvularia clavata.